The primary structure comprises 193 residues: Inner membrane-spanning protein YciB (193 aa).

Transmembrane regions (helical) follow at residues Thr-5–Tyr-25, Ile-36–Val-56, Trp-67–Phe-87, Ala-93–Gly-113, Val-138–Val-158, and Phe-164–Leu-184.

This sequence belongs to the YciB family.

It localises to the cell inner membrane. In terms of biological role, plays a role in cell envelope biogenesis, maintenance of cell envelope integrity and membrane homeostasis. In Vitreoscilla sp. (strain C1), this protein is Inner membrane-spanning protein YciB.